The chain runs to 98 residues: Small ribosomal subunit protein bS20 (98 aa).

The protein belongs to the bacterial ribosomal protein bS20 family.

In terms of biological role, binds directly to 16S ribosomal RNA. In Kosmotoga olearia (strain ATCC BAA-1733 / DSM 21960 / TBF 19.5.1), this protein is Small ribosomal subunit protein bS20.